The following is a 185-amino-acid chain: Elongation factor P (185 aa).

The protein belongs to the elongation factor P family.

The protein resides in the cytoplasm. It functions in the pathway protein biosynthesis; polypeptide chain elongation. In terms of biological role, involved in peptide bond synthesis. Stimulates efficient translation and peptide-bond synthesis on native or reconstituted 70S ribosomes in vitro. Probably functions indirectly by altering the affinity of the ribosome for aminoacyl-tRNA, thus increasing their reactivity as acceptors for peptidyl transferase. In Caldanaerobacter subterraneus subsp. tengcongensis (strain DSM 15242 / JCM 11007 / NBRC 100824 / MB4) (Thermoanaerobacter tengcongensis), this protein is Elongation factor P.